The primary structure comprises 367 residues: MTHRTKTRPVKVGNLTIGGNNELIIQSMTTTKTHDVEATVAEIKRLEEAGCQVVRVAVPDERAANAIADIKKQINIPLVADIHFDYRLALKAIEGGIDKVRINPGNIGRRHKVEAVVNAAKERGIPIRIGVNAGSLERHILEKYGYPTADGMVESALHHIKILEDLDFHDIIVSMKASDVNLAIEAYEKAARAFDYPLHLGITESGTLFAGTVKSAAGLGAILSKGIGNTLRISLSADPVEEVKVARELLKSFGLASNAATLISCPTCGRIEIDLISIANEVEEYISTLQVPIKVAVLGCAVNGPGEAREADIGIAGARGEGLLFRKGQVVRKVPEEIMVEELKKEIDVIAAEMAAEREKEKETQEQ.

Cys-265, Cys-268, Cys-300, and Glu-307 together coordinate [4Fe-4S] cluster.

Belongs to the IspG family. It depends on [4Fe-4S] cluster as a cofactor.

The enzyme catalyses (2E)-4-hydroxy-3-methylbut-2-enyl diphosphate + oxidized [flavodoxin] + H2O + 2 H(+) = 2-C-methyl-D-erythritol 2,4-cyclic diphosphate + reduced [flavodoxin]. The protein operates within isoprenoid biosynthesis; isopentenyl diphosphate biosynthesis via DXP pathway; isopentenyl diphosphate from 1-deoxy-D-xylulose 5-phosphate: step 5/6. Its function is as follows. Converts 2C-methyl-D-erythritol 2,4-cyclodiphosphate (ME-2,4cPP) into 1-hydroxy-2-methyl-2-(E)-butenyl 4-diphosphate. This chain is 4-hydroxy-3-methylbut-2-en-1-yl diphosphate synthase (flavodoxin), found in Bacillus cereus (strain ATCC 10987 / NRS 248).